Reading from the N-terminus, the 378-residue chain is Zinc transporter 7 (378 aa).

The Cytoplasmic portion of the chain corresponds to 1–37 (MLPLSIKDDEYKPPKFNLFGKISGWFRSILSDKTSRN). Residues 38–58 (LFFFLCLNLSFAFVELLYGIW) form a helical membrane-spanning segment. At 59–67 (SNCLGLISD) the chain is on the lumenal side. The chain crosses the membrane as a helical span at residues 68–88 (SFHMFFDSTAILAGLAASVIS). Topologically, residues 89 to 102 (KWRDNDAFSYGYVR) are cytoplasmic. Residues 103–123 (AEVLAGFVNGLFLIFTAFFIF) form a helical membrane-spanning segment. Residues 124 to 140 (SEGVERALAPPDVHHER) are Lumenal-facing. Residues 141-161 (LLLVSILGFVVNLVGIFVFNH) form a helical membrane-spanning segment. Positions 161–220 (HGGHGHSHGSGHGHSHSLFNGALDHSHGHEDHCHSHEAKHGAAHSHDHDHAHGHGHLHSH) are his-rich loop. At 162-238 (GGHGHSHGSG…AGPSRQILQG (77 aa)) the chain is on the cytoplasmic side. A compositionally biased stretch (basic and acidic residues) spans 186-223 (SHGHEDHCHSHEAKHGAAHSHDHDHAHGHGHLHSHDGP). The tract at residues 186–224 (SHGHEDHCHSHEAKHGAAHSHDHDHAHGHGHLHSHDGPS) is disordered. The helical transmembrane segment at 239 to 259 (VFLHILADTLGSIGVIASAIM) threads the bilayer. At 260–264 (MQNFG) the chain is on the lumenal side. Residues 265 to 285 (LMIADPICSILIAILIVVSVI) form a helical membrane-spanning segment. Residues 286–378 (PLLRESVGIL…LYVQIDFAAM (93 aa)) are Cytoplasmic-facing.

Belongs to the cation diffusion facilitator (CDF) transporter (TC 2.A.4) family. SLC30A subfamily. Homooligomer. Highly expressed in liver, spleen, duodenum and part of the jejunum of small intestine (at protein level). Moderately expressed in kidney, lung, and brain. Barely detectable in heart. In brain, expressed in cerebellum, cerebral cortex and hippocampus (at protein level).

The protein localises to the golgi apparatus membrane. Its subcellular location is the cytoplasmic vesicle. It localises to the golgi apparatus. It is found in the trans-Golgi network. The protein resides in the sarcoplasmic reticulum. The protein localises to the mitochondrion. It carries out the reaction Zn(2+)(in) = Zn(2+)(out). In terms of biological role, zinc ion transporter mediating zinc entry from the cytosol into the lumen of organelles along the secretory pathway. By contributing to zinc ion homeostasis within the early secretory pathway, regulates the activation and folding of enzymes like alkaline phosphatases. The polypeptide is Zinc transporter 7 (Mus musculus (Mouse)).